Consider the following 983-residue polypeptide: Glycine dehydrogenase (decarboxylating) (983 aa).

An N6-(pyridoxal phosphate)lysine modification is found at lysine 731.

This sequence belongs to the GcvP family. As to quaternary structure, the glycine cleavage system is composed of four proteins: P, T, L and H. Pyridoxal 5'-phosphate is required as a cofactor.

It catalyses the reaction N(6)-[(R)-lipoyl]-L-lysyl-[glycine-cleavage complex H protein] + glycine + H(+) = N(6)-[(R)-S(8)-aminomethyldihydrolipoyl]-L-lysyl-[glycine-cleavage complex H protein] + CO2. Functionally, the glycine cleavage system catalyzes the degradation of glycine. The P protein binds the alpha-amino group of glycine through its pyridoxal phosphate cofactor; CO(2) is released and the remaining methylamine moiety is then transferred to the lipoamide cofactor of the H protein. The chain is Glycine dehydrogenase (decarboxylating) from Nostoc sp. (strain PCC 7120 / SAG 25.82 / UTEX 2576).